The following is a 358-amino-acid chain: UDP-N-acetylglucosamine--N-acetylmuramyl-(pentapeptide) pyrophosphoryl-undecaprenol N-acetylglucosamine transferase (358 aa).

UDP-N-acetyl-alpha-D-glucosamine contacts are provided by residues 10–12 (TGG), Asn-124, Arg-165, Ser-191, Ile-246, and Gln-291.

The protein belongs to the glycosyltransferase 28 family. MurG subfamily.

It localises to the cell inner membrane. The enzyme catalyses di-trans,octa-cis-undecaprenyl diphospho-N-acetyl-alpha-D-muramoyl-L-alanyl-D-glutamyl-meso-2,6-diaminopimeloyl-D-alanyl-D-alanine + UDP-N-acetyl-alpha-D-glucosamine = di-trans,octa-cis-undecaprenyl diphospho-[N-acetyl-alpha-D-glucosaminyl-(1-&gt;4)]-N-acetyl-alpha-D-muramoyl-L-alanyl-D-glutamyl-meso-2,6-diaminopimeloyl-D-alanyl-D-alanine + UDP + H(+). The protein operates within cell wall biogenesis; peptidoglycan biosynthesis. Its function is as follows. Cell wall formation. Catalyzes the transfer of a GlcNAc subunit on undecaprenyl-pyrophosphoryl-MurNAc-pentapeptide (lipid intermediate I) to form undecaprenyl-pyrophosphoryl-MurNAc-(pentapeptide)GlcNAc (lipid intermediate II). In Citrifermentans bemidjiense (strain ATCC BAA-1014 / DSM 16622 / JCM 12645 / Bem) (Geobacter bemidjiensis), this protein is UDP-N-acetylglucosamine--N-acetylmuramyl-(pentapeptide) pyrophosphoryl-undecaprenol N-acetylglucosamine transferase.